Here is a 345-residue protein sequence, read N- to C-terminus: Carbamoyl phosphate synthase small chain (345 aa).

The interval methionine 1–valine 169 is CPSase. Serine 45, glycine 213, and glycine 215 together coordinate L-glutamine. The region spanning threonine 168 to alanine 345 is the Glutamine amidotransferase type-1 domain. The active-site Nucleophile is the cysteine 242. L-glutamine is bound by residues phenylalanine 243, glutamine 246, asparagine 282, glycine 284, and tyrosine 285. Residues histidine 321 and glutamate 323 contribute to the active site.

Belongs to the CarA family. As to quaternary structure, composed of two chains; the small (or glutamine) chain promotes the hydrolysis of glutamine to ammonia, which is used by the large (or ammonia) chain to synthesize carbamoyl phosphate. Tetramer of heterodimers (alpha,beta)4.

The enzyme catalyses hydrogencarbonate + L-glutamine + 2 ATP + H2O = carbamoyl phosphate + L-glutamate + 2 ADP + phosphate + 2 H(+). It catalyses the reaction L-glutamine + H2O = L-glutamate + NH4(+). It participates in amino-acid biosynthesis; L-arginine biosynthesis; carbamoyl phosphate from bicarbonate: step 1/1. The protein operates within pyrimidine metabolism; UMP biosynthesis via de novo pathway; (S)-dihydroorotate from bicarbonate: step 1/3. Its function is as follows. Small subunit of the glutamine-dependent carbamoyl phosphate synthetase (CPSase). CPSase catalyzes the formation of carbamoyl phosphate from the ammonia moiety of glutamine, carbonate, and phosphate donated by ATP, constituting the first step of 2 biosynthetic pathways, one leading to arginine and/or urea and the other to pyrimidine nucleotides. The small subunit (glutamine amidotransferase) binds and cleaves glutamine to supply the large subunit with the substrate ammonia. This chain is Carbamoyl phosphate synthase small chain, found in Thermoplasma volcanium (strain ATCC 51530 / DSM 4299 / JCM 9571 / NBRC 15438 / GSS1).